The following is a 1025-amino-acid chain: DNA polymerase (1025 aa).

The protein belongs to the DNA polymerase type-B family.

The catalysed reaction is DNA(n) + a 2'-deoxyribonucleoside 5'-triphosphate = DNA(n+1) + diphosphate. Functionally, replicates the viral genome. Host DNA polymerases cannot substitute for the viral enzyme in this process. The polypeptide is DNA polymerase (Noctuidae (owlet moths)).